Here is a 1023-residue protein sequence, read N- to C-terminus: Transmembrane protein 132A (1023 aa).

The first 35 residues, 1–35 (MCARMAGRTTAAPRGPYGPWLCLLVALALDVVRVD), serve as a signal peptide directing secretion. The Extracellular segment spans residues 36 to 852 (CGQAPLDPVY…VTELELGMYA (817 aa)). A disordered region spans residues 212-246 (AAEGPGGCGSGEENDPGEQALPVGGVELRPADPPQ). N280 is a glycosylation site (N-linked (GlcNAc...) asparagine). 2 disordered regions span residues 512 to 533 (WRVP…DEAE) and 766 to 839 (LPPA…MVPA). Residues 515 to 527 (PGPAEGPAEPAAE) show a composition bias toward low complexity. A Phosphoserine; by FAM20C modification is found at S529. The binds to HSPA5/GRP78 stretch occupies residues 611 to 916 (IEVRSPLSDS…RQLDRQSPGP (306 aa)). The confers cellular localization similar to full-length form stretch occupies residues 671–1023 (LPAPKQEVAL…NYMERIRGSS (353 aa)). Residues 778 to 790 (SSPAWSPPATEAT) show a composition bias toward low complexity. Residues 809–823 (GKFERAEEEARKEET) show a composition bias toward basic and acidic residues. Residues 824 to 836 (EAREEEEEEEEEM) show a composition bias toward acidic residues. A helical transmembrane segment spans residues 853–873 (LLGVFCVAIFIFLVNGVVFVL). Over 874-1023 (RYQRKEPPDS…NYMERIRGSS (150 aa)) the chain is Cytoplasmic. The disordered stretch occupies residues 905-961 (LSRQLDRQSPGPPKGEGSCPCESGGGGEAPTLAPGPPGGTTSSSSTLARKEAGGRRK).

Belongs to the TMEM132 family. Interacts with HSPA5/GRP78.

Its subcellular location is the golgi apparatus membrane. It is found in the endoplasmic reticulum membrane. Its function is as follows. May play a role in embryonic and postnatal development of the brain. Increased resistance to cell death induced by serum starvation in cultured cells. Regulates cAMP-induced GFAP gene expression via STAT3 phosphorylation. This is Transmembrane protein 132A (TMEM132A) from Homo sapiens (Human).